The primary structure comprises 268 residues: Hydroxyacylglutathione hydrolase (268 aa).

Positions 56, 58, 60, 61, 113, 130, and 168 each coordinate Zn(2+).

Belongs to the metallo-beta-lactamase superfamily. Glyoxalase II family. As to quaternary structure, monomer. Zn(2+) is required as a cofactor.

It catalyses the reaction an S-(2-hydroxyacyl)glutathione + H2O = a 2-hydroxy carboxylate + glutathione + H(+). Its pathway is secondary metabolite metabolism; methylglyoxal degradation; (R)-lactate from methylglyoxal: step 2/2. Thiolesterase that catalyzes the hydrolysis of S-D-lactoyl-glutathione to form glutathione and D-lactic acid. This Hydrogenovibrio crunogenus (strain DSM 25203 / XCL-2) (Thiomicrospira crunogena) protein is Hydroxyacylglutathione hydrolase.